The primary structure comprises 544 residues: Chaperonin GroEL (544 aa).

Residues 30–33 (TLGP), K51, 87–91 (DGTTT), G415, 479–481 (NAA), and D495 each bind ATP.

It belongs to the chaperonin (HSP60) family. Forms a cylinder of 14 subunits composed of two heptameric rings stacked back-to-back. Interacts with the co-chaperonin GroES.

It is found in the cytoplasm. It catalyses the reaction ATP + H2O + a folded polypeptide = ADP + phosphate + an unfolded polypeptide.. Together with its co-chaperonin GroES, plays an essential role in assisting protein folding. The GroEL-GroES system forms a nano-cage that allows encapsulation of the non-native substrate proteins and provides a physical environment optimized to promote and accelerate protein folding. The protein is Chaperonin GroEL of Francisella tularensis subsp. novicida (strain U112).